Here is a 100-residue protein sequence, read N- to C-terminus: MAKKSLIEREKKRQKLEQKYHLIRRSPKKQISKAQSLSEKWELHGKLQSLPRNSAPTRLRRRCFSTGRPRGNCRDFGLSGHILREMVHEGLLPGATRSSW.

Belongs to the universal ribosomal protein uS14 family. As to quaternary structure, part of the 30S ribosomal subunit.

Its subcellular location is the plastid. The protein resides in the chloroplast. Functionally, binds 16S rRNA, required for the assembly of 30S particles. In Cicer arietinum (Chickpea), this protein is Small ribosomal subunit protein uS14c.